The chain runs to 65 residues: Large ribosomal subunit protein bL35 (65 aa).

This sequence belongs to the bacterial ribosomal protein bL35 family.

This chain is Large ribosomal subunit protein bL35, found in Paraburkholderia xenovorans (strain LB400).